The following is a 116-amino-acid chain: Large ribosomal subunit protein bL20 (116 aa).

This sequence belongs to the bacterial ribosomal protein bL20 family.

Binds directly to 23S ribosomal RNA and is necessary for the in vitro assembly process of the 50S ribosomal subunit. It is not involved in the protein synthesizing functions of that subunit. In Helicobacter pylori (strain G27), this protein is Large ribosomal subunit protein bL20.